The primary structure comprises 403 residues: Peroxisomal membrane protein PEX13 (403 aa).

Positions 1 to 11 (MASQPPPPPKP) are enriched in pro residues. Residues 1–69 (MASQPPPPPK…SQQTGGNNVN (69 aa)) are disordered. Residues 1–134 (MASQPPPPPK…SSRGAFQSIE (134 aa)) lie on the Peroxisomal matrix side of the membrane. Residues 59–69 (PSQQTGGNNVN) are compositionally biased toward polar residues. A helical membrane pass occupies residues 135-155 (SIVHAFASVSMMMDATFSAVY). The tract at residues 145-233 (MMMDATFSAV…EDQANNSAKS (89 aa)) is targeting to peroxisomes. Over 156–174 (NSFRAVLDVANHFSRLKIH) the chain is Cytoplasmic. The chain crosses the membrane as a helical span at residues 175–192 (FTKVFSAFALVRTIRYLY). The segment at 175–196 (FTKVFSAFALVRTIRYLYRRLQ) is interaction with PEX19. At 193–233 (RRLQWMMGLRRGSENEDLWAESEGTVACLGAEDQANNSAKS) the chain is on the peroxisomal matrix side. The helical transmembrane segment at 234–254 (WPIFLFFAVILGGPYLIWKLL) threads the bilayer. Residues 255-403 (STHSDEVTDS…TGKNGDKQDL (149 aa)) are Cytoplasmic-facing. Residues 272–336 (DDHVVARAEY…PANYVKILGK (65 aa)) enclose the SH3 domain. Disordered stretches follow at residues 341–364 (KTVE…VKGV) and 381–403 (FVET…KQDL). Positions 344–364 (ESSTMPKQQQSFTNPTSVKGV) are enriched in polar residues.

It belongs to the peroxin-13 family. As to quaternary structure, interacts (via SH3 domain) with PEX14 (via SH3-binding motif); forming the PEX13-PEX14 docking complex. Interacts with PEX19.

The protein resides in the peroxisome membrane. Its function is as follows. Component of the PEX13-PEX14 docking complex, a translocon channel that specifically mediates the import of peroxisomal cargo proteins bound to PEX5 receptor. The PEX13-PEX14 docking complex forms a large import pore which can be opened to a diameter of about 9 nm. Mechanistically, PEX5 receptor along with cargo proteins associates with the PEX14 subunit of the PEX13-PEX14 docking complex in the cytosol, leading to the insertion of the receptor into the organelle membrane with the concomitant translocation of the cargo into the peroxisome matrix. Involved in the import of PTS1- and PTS2-type containing proteins. The protein is Peroxisomal membrane protein PEX13 of Rattus norvegicus (Rat).